A 536-amino-acid chain; its full sequence is Probable cytochrome P450 318a1 (536 aa).

Residues 439-457 (EEEQLSKGHNDSGSGEKRR) show a composition bias toward basic and acidic residues. The disordered stretch occupies residues 439–460 (EEEQLSKGHNDSGSGEKRRQRD). Cys-477 lines the heme pocket.

This sequence belongs to the cytochrome P450 family. The cofactor is heme.

It is found in the endoplasmic reticulum membrane. It localises to the microsome membrane. Functionally, may be involved in the metabolism of insect hormones and in the breakdown of synthetic insecticides. The sequence is that of Probable cytochrome P450 318a1 (Cyp318a1) from Drosophila melanogaster (Fruit fly).